We begin with the raw amino-acid sequence, 133 residues long: Small ribosomal subunit protein eS24 (133 aa).

Residue Met1 is modified to N-acetylmethionine. Thr9 carries the post-translational modification Phosphothreonine. Residue Lys37 forms a Glycyl lysine isopeptide (Lys-Gly) (interchain with G-Cter in SUMO2) linkage. Residues 92–133 (ARHGLYEKKKTSRKQRKERKNRMKKVRGTAKANVGAGKKPKE) are disordered. Over residues 101–119 (KTSRKQRKERKNRMKKVRG) the composition is skewed to basic residues.

It belongs to the eukaryotic ribosomal protein eS24 family. As to quaternary structure, component of the small ribosomal subunit. Part of the small subunit (SSU) processome, composed of more than 70 proteins and the RNA chaperone small nucleolar RNA (snoRNA) U3.

The protein localises to the cytoplasm. It is found in the nucleus. The protein resides in the nucleolus. In terms of biological role, component of the small ribosomal subunit. The ribosome is a large ribonucleoprotein complex responsible for the synthesis of proteins in the cell. Required for processing of pre-rRNA and maturation of 40S ribosomal subunits. Part of the small subunit (SSU) processome, first precursor of the small eukaryotic ribosomal subunit. During the assembly of the SSU processome in the nucleolus, many ribosome biogenesis factors, an RNA chaperone and ribosomal proteins associate with the nascent pre-rRNA and work in concert to generate RNA folding, modifications, rearrangements and cleavage as well as targeted degradation of pre-ribosomal RNA by the RNA exosome. The polypeptide is Small ribosomal subunit protein eS24 (RPS24) (Oryctolagus cuniculus (Rabbit)).